A 287-amino-acid polypeptide reads, in one-letter code: Phosphatidylserine decarboxylase proenzyme (287 aa).

Active-site charge relay system; for autoendoproteolytic cleavage activity residues include Asp-90, His-147, and Ser-253. Ser-253 (schiff-base intermediate with substrate; via pyruvic acid; for decarboxylase activity) is an active-site residue. Ser-253 carries the post-translational modification Pyruvic acid (Ser); by autocatalysis.

It belongs to the phosphatidylserine decarboxylase family. PSD-B subfamily. Prokaryotic type I sub-subfamily. In terms of assembly, heterodimer of a large membrane-associated beta subunit and a small pyruvoyl-containing alpha subunit. The cofactor is pyruvate. Is synthesized initially as an inactive proenzyme. Formation of the active enzyme involves a self-maturation process in which the active site pyruvoyl group is generated from an internal serine residue via an autocatalytic post-translational modification. Two non-identical subunits are generated from the proenzyme in this reaction, and the pyruvate is formed at the N-terminus of the alpha chain, which is derived from the carboxyl end of the proenzyme. The autoendoproteolytic cleavage occurs by a canonical serine protease mechanism, in which the side chain hydroxyl group of the serine supplies its oxygen atom to form the C-terminus of the beta chain, while the remainder of the serine residue undergoes an oxidative deamination to produce ammonia and the pyruvoyl prosthetic group on the alpha chain. During this reaction, the Ser that is part of the protease active site of the proenzyme becomes the pyruvoyl prosthetic group, which constitutes an essential element of the active site of the mature decarboxylase.

It is found in the cell membrane. The catalysed reaction is a 1,2-diacyl-sn-glycero-3-phospho-L-serine + H(+) = a 1,2-diacyl-sn-glycero-3-phosphoethanolamine + CO2. Its pathway is phospholipid metabolism; phosphatidylethanolamine biosynthesis; phosphatidylethanolamine from CDP-diacylglycerol: step 2/2. Functionally, catalyzes the formation of phosphatidylethanolamine (PtdEtn) from phosphatidylserine (PtdSer). This is Phosphatidylserine decarboxylase proenzyme from Aliivibrio fischeri (strain MJ11) (Vibrio fischeri).